The primary structure comprises 355 residues: tRNA-specific 2-thiouridylase MnmA 1 (355 aa).

6–13 provides a ligand contact to ATP; that stretch reads LLSGGVDS. Residues 92-94 are interaction with target base in tRNA; sequence NPD. C97 acts as the Nucleophile in catalysis. Residues C97 and C192 are joined by a disulfide bond. G120 is a binding site for ATP. The interaction with tRNA stretch occupies residues 142-144; that stretch reads KDQ. C192 (cysteine persulfide intermediate) is an active-site residue.

The protein belongs to the MnmA/TRMU family.

It localises to the cytoplasm. It catalyses the reaction S-sulfanyl-L-cysteinyl-[protein] + uridine(34) in tRNA + AH2 + ATP = 2-thiouridine(34) in tRNA + L-cysteinyl-[protein] + A + AMP + diphosphate + H(+). Its function is as follows. Catalyzes the 2-thiolation of uridine at the wobble position (U34) of tRNA, leading to the formation of s(2)U34. The sequence is that of tRNA-specific 2-thiouridylase MnmA 1 from Bacteroides thetaiotaomicron (strain ATCC 29148 / DSM 2079 / JCM 5827 / CCUG 10774 / NCTC 10582 / VPI-5482 / E50).